We begin with the raw amino-acid sequence, 355 residues long: Probable nitronate monooxygenase (355 aa).

Residues N71, Q175, G180, G219, and 238–241 contribute to the FMN site; that span reads QMGT.

Belongs to the nitronate monooxygenase family. NMO class I subfamily. FMN serves as cofactor.

The catalysed reaction is 3 propionate 3-nitronate + 3 O2 + H2O = 3 3-oxopropanoate + 2 nitrate + nitrite + H2O2 + 3 H(+). Nitronate monooxygenase that uses molecular oxygen to catalyze the oxidative denitrification of alkyl nitronates. Acts on propionate 3-nitronate (P3N), the presumed physiological substrate. Probably functions in the detoxification of P3N, a metabolic poison produced by plants and fungi as a defense mechanism. The sequence is that of Probable nitronate monooxygenase from Staphylococcus saprophyticus subsp. saprophyticus (strain ATCC 15305 / DSM 20229 / NCIMB 8711 / NCTC 7292 / S-41).